The chain runs to 475 residues: Sulfate adenylyltransferase subunit 1 (475 aa).

The 215-residue stretch at 25 to 239 (KSLLRFLTCG…EVLETVEIQR (215 aa)) folds into the tr-type G domain. The tract at residues 34-41 (GSVDDGKS) is G1. 34 to 41 (GSVDDGKS) serves as a coordination point for GTP. The interval 92 to 96 (GITID) is G2. The interval 113–116 (DTPG) is G3. Residues 113 to 117 (DTPGH) and 168 to 171 (NKMD) each bind GTP. A G4 region spans residues 168–171 (NKMD). Residues 206 to 208 (SAL) are G5.

This sequence belongs to the TRAFAC class translation factor GTPase superfamily. Classic translation factor GTPase family. CysN/NodQ subfamily. Heterodimer composed of CysD, the smaller subunit, and CysN.

It catalyses the reaction sulfate + ATP + H(+) = adenosine 5'-phosphosulfate + diphosphate. It functions in the pathway sulfur metabolism; hydrogen sulfide biosynthesis; sulfite from sulfate: step 1/3. With CysD forms the ATP sulfurylase (ATPS) that catalyzes the adenylation of sulfate producing adenosine 5'-phosphosulfate (APS) and diphosphate, the first enzymatic step in sulfur assimilation pathway. APS synthesis involves the formation of a high-energy phosphoric-sulfuric acid anhydride bond driven by GTP hydrolysis by CysN coupled to ATP hydrolysis by CysD. This Escherichia coli (strain ATCC 8739 / DSM 1576 / NBRC 3972 / NCIMB 8545 / WDCM 00012 / Crooks) protein is Sulfate adenylyltransferase subunit 1.